A 386-amino-acid polypeptide reads, in one-letter code: L-arabinitol 4-dehydrogenase (386 aa).

Positions 55, 80, 81, 110, 113, 116, 124, and 165 each coordinate Zn(2+). NAD(+) is bound by residues 192–193 (PI), D213, R218, I293, and 317–319 (QYR).

This sequence belongs to the zinc-containing alcohol dehydrogenase family. Homotetramer. It depends on Zn(2+) as a cofactor.

The enzyme catalyses L-arabinitol + NAD(+) = L-xylulose + NADH + H(+). It participates in carbohydrate degradation; L-arabinose degradation via L-arabinitol; D-xylulose 5-phosphate from L-arabinose (fungal route): step 2/5. Catalyzes the NAD-dependent oxidation of L-arabinitol to L-xylulose in the fungal L-arabinose catabolic pathway. L-arabinose catabolism is important for using plant material as a carbon source. Not active with NADP as cosubstrate. This is L-arabinitol 4-dehydrogenase (ladA) from Aspergillus niger (strain ATCC MYA-4892 / CBS 513.88 / FGSC A1513).